Here is a 93-residue protein sequence, read N- to C-terminus: Uteroglobin (93 aa).

The N-terminal stretch at 1–17 (MKLAITIILVMLSVCYS) is a signal peptide.

This sequence belongs to the secretoglobin family. In terms of assembly, antiparallel homodimer; disulfide-linked. Interaction with LMBR1L is controversial.

It is found in the secreted. In terms of biological role, binds phosphatidylcholine, phosphatidylinositol, polychlorinated biphenyls (PCB) and weakly progesterone, potent inhibitor of phospholipase A2. The polypeptide is Uteroglobin (SCGB1A1) (Neotomodon alstoni (Mexican volcano mouse)).